We begin with the raw amino-acid sequence, 1488 residues long: Chromosome partition protein MukB (1488 aa).

34 to 41 (GGNGAGKS) provides a ligand contact to ATP. Coiled coils occupy residues 326–418 (LEAD…QYNQ), 444–472 (LDTFQAKEQEATEKLLSLEQKMSVAQTAH), and 509–602 (RHLA…QRAP). The tract at residues 666-783 (PGGAEDQRLN…SLPIFGRAAR (118 aa)) is flexible hinge. 3 coiled-coil regions span residues 835 to 923 (EAEI…AKLE), 977 to 1116 (EMLS…AKAG), and 1209 to 1265 (VEAI…LQSV). The segment at 1049-1074 (ADSGAEERARQRRDELHAQLSNNRSR) is disordered. The span at 1051-1065 (SGAEERARQRRDELH) shows a compositional bias: basic and acidic residues.

It belongs to the SMC family. MukB subfamily. As to quaternary structure, homodimerization via its hinge domain. Binds to DNA via its C-terminal region. Interacts, and probably forms a ternary complex, with MukE and MukF via its C-terminal region. The complex formation is stimulated by calcium or magnesium. Interacts with tubulin-related protein FtsZ.

The protein resides in the cytoplasm. The protein localises to the nucleoid. Its function is as follows. Plays a central role in chromosome condensation, segregation and cell cycle progression. Functions as a homodimer, which is essential for chromosome partition. Involved in negative DNA supercoiling in vivo, and by this means organize and compact chromosomes. May achieve or facilitate chromosome segregation by condensation DNA from both sides of a centrally located replisome during cell division. In Salmonella enteritidis PT4 (strain P125109), this protein is Chromosome partition protein MukB.